The chain runs to 515 residues: MVADQAVLSSWRSVVGSLEDDARVSARLMGFVYLAQPQGLIGNTLLLAVPNETTRETLQGTQVADALTDALTQEFREEILLAISIDANLQPPRTPSSEARRSSLAGGPSGAAAPDVELPPAATAATSRRAVAEELPGFRIEPPADVVPAANAAPNGNGKPTPAPPSTSAETSRLNDRYHFETFVIGSSNRFAHAAANAVAEAPAKAYNPLFIYGESGLGKTHLLHAIGHYARRLYPGLRVRYVNSEEFTNDFINSIRHDEGASFKQVYRNVDILLIDDIQFLADKEATVEEFFHTFNTLYNNNKQVVITSDLPPKQLSGFEDRLRSRFEWGLITDIQPPDLETRIAILRKKAEAEGLVAPPEALEYIASRISTNIRELEGALIRVTAFASLNRQTVDIELAEHVLKDLITDETAHEITPELILHATGEYFNLTLEELTSKSRTRTLVTARQIAMYLLRELTEMSLPKIGQVLGGRDHTTVIHADRKIRELMAERRTIYNQVTELTNEIKRKQRGA.

The interval 1–89 (MVADQAVLSS…LLAISIDANL (89 aa)) is domain I, interacts with DnaA modulators. The interval 89-172 (LQPPRTPSSE…APPSTSAETS (84 aa)) is domain II. Disordered stretches follow at residues 90–130 (QPPR…SRRA) and 142–171 (PPAD…SAET). 2 stretches are compositionally biased toward low complexity: residues 102–114 (SSLA…AAAP) and 143–160 (PADV…NGKP). Residues 173 to 389 (RLNDRYHFET…GALIRVTAFA (217 aa)) form a domain III, AAA+ region region. The ATP site is built by G217, G219, K220, and T221. The interval 390 to 515 (SLNRQTVDIE…NEIKRKQRGA (126 aa)) is domain IV, binds dsDNA.

This sequence belongs to the DnaA family. As to quaternary structure, oligomerizes as a right-handed, spiral filament on DNA at oriC.

It localises to the cytoplasm. Functionally, plays an essential role in the initiation and regulation of chromosomal replication. ATP-DnaA binds to the origin of replication (oriC) to initiate formation of the DNA replication initiation complex once per cell cycle. Binds the DnaA box (a 9 base pair repeat at the origin) and separates the double-stranded (ds)DNA. Forms a right-handed helical filament on oriC DNA; dsDNA binds to the exterior of the filament while single-stranded (ss)DNA is stabiized in the filament's interior. The ATP-DnaA-oriC complex binds and stabilizes one strand of the AT-rich DNA unwinding element (DUE), permitting loading of DNA polymerase. After initiation quickly degrades to an ADP-DnaA complex that is not apt for DNA replication. Binds acidic phospholipids. The chain is Chromosomal replication initiator protein DnaA from Micrococcus luteus (strain ATCC 4698 / DSM 20030 / JCM 1464 / CCM 169 / CCUG 5858 / IAM 1056 / NBRC 3333 / NCIMB 9278 / NCTC 2665 / VKM Ac-2230) (Micrococcus lysodeikticus).